A 339-amino-acid chain; its full sequence is MFYKIAQKFMFQMDPELAHNFAIGSLKFTGNSPLNCFYAQNIKPAPVTMMGLTFPNPVGLAAGMDKEGECIDAFHAMGFGHIEVGTVTPRPQPGNEQPRCFRLKPAKAIINRMGFNNKGVDNLVANLKAVKSNAMVGVNIGKNKDTPVEQGKEDYLICMDKVYPYAAYIAVNISSPNTPGLRSLQYGDLLDDLLGSLKQKQKELAEQHGKYVPIALKIAPDLSSEEIEKIADALIRSEFDAAIATNTTLTRDGVSGLLNANEAGGLSGKPLNSLSTMVIKQLADCLKGQLPIIGVGGINSAEDALDKLDAGAEMVQIYSGFIYQGPKLIKDIVEAYRIK.

FMN-binding positions include 62-66 and T86; that span reads AGMDK. K66 provides a ligand contact to substrate. Residue 111–115 coordinates substrate; that stretch reads NRMGF. FMN contacts are provided by N139 and N172. Residue N172 participates in substrate binding. S175 functions as the Nucleophile in the catalytic mechanism. N177 serves as a coordination point for substrate. The FMN site is built by K217 and T245. 246 to 247 provides a ligand contact to substrate; sequence NT. Residues G268, G297, and 318–319 each bind FMN; that span reads YS.

Belongs to the dihydroorotate dehydrogenase family. Type 2 subfamily. As to quaternary structure, monomer. Requires FMN as cofactor.

The protein resides in the cell membrane. It catalyses the reaction (S)-dihydroorotate + a quinone = orotate + a quinol. It functions in the pathway pyrimidine metabolism; UMP biosynthesis via de novo pathway; orotate from (S)-dihydroorotate (quinone route): step 1/1. Functionally, catalyzes the conversion of dihydroorotate to orotate with quinone as electron acceptor. The protein is Dihydroorotate dehydrogenase (quinone) of Shewanella pealeana (strain ATCC 700345 / ANG-SQ1).